The chain runs to 1881 residues: Nuclear pore membrane glycoprotein 210-like (1881 aa).

Positions 1-32 (MIAFGAPRRRSFGLLFSLAPHLFFLFLIGTLA) are cleaved as a signal peptide. Residues N80, N344, and N808 are each glycosylated (N-linked (GlcNAc...) asparagine). The BIG2 domain maps to 1078 to 1150 (FPPFRLIPEK…TIQTVNEDTG (73 aa)). N1441 carries an N-linked (GlcNAc...) asparagine glycan. The helical transmembrane segment at 1804–1824 (YQILLFTLFAVLASTSFIFLA) threads the bilayer.

It belongs to the NUP210 family. As to expression, expressed in testis.

Its subcellular location is the nucleus membrane. It localises to the nucleus. It is found in the nucleoplasm. This chain is Nuclear pore membrane glycoprotein 210-like (Nup210l), found in Mus musculus (Mouse).